The following is a 270-amino-acid chain: Indole-3-glycerol phosphate synthase (270 aa).

It belongs to the TrpC family.

It catalyses the reaction 1-(2-carboxyphenylamino)-1-deoxy-D-ribulose 5-phosphate + H(+) = (1S,2R)-1-C-(indol-3-yl)glycerol 3-phosphate + CO2 + H2O. The protein operates within amino-acid biosynthesis; L-tryptophan biosynthesis; L-tryptophan from chorismate: step 4/5. The chain is Indole-3-glycerol phosphate synthase from Salinibacter ruber (strain DSM 13855 / M31).